The following is a 177-amino-acid chain: GTP-dependent dephospho-CoA kinase (177 aa).

The GTP site is built by Gly-25, Tyr-31, Asp-48, Val-49, Val-50, Asp-67, Lys-69, Glu-124, and Asp-147.

Belongs to the GTP-dependent DPCK family. In terms of assembly, monomer in solution.

The enzyme catalyses 3'-dephospho-CoA + GTP = GDP + CoA + H(+). It participates in cofactor biosynthesis; coenzyme A biosynthesis. Functionally, catalyzes the GTP-dependent phosphorylation of the 3'-hydroxyl group of dephosphocoenzyme A to form coenzyme A (CoA). Can also use UTP, with lower efficiency and has weak activity with ATP, but shows a strong preference for GTP as the phosphate donor. The polypeptide is GTP-dependent dephospho-CoA kinase (Thermococcus kodakarensis (strain ATCC BAA-918 / JCM 12380 / KOD1) (Pyrococcus kodakaraensis (strain KOD1))).